The primary structure comprises 722 residues: Catalase B (722 aa).

A signal peptide spans 1 to 15 (MRALGLVGLVGVANA). Residues histidine 100 and asparagine 173 contribute to the active site. Tyrosine 388 is a heme binding site.

Belongs to the catalase family. Heme is required as a cofactor.

The protein localises to the secreted. The catalysed reaction is 2 H2O2 = O2 + 2 H2O. Occurs in almost all aerobically respiring organisms and serves to protect cells from the toxic effects of hydrogen peroxide. This is Catalase B (catB) from Emericella nidulans (strain FGSC A4 / ATCC 38163 / CBS 112.46 / NRRL 194 / M139) (Aspergillus nidulans).